The primary structure comprises 366 residues: tRNA 2-selenouridine synthase (366 aa).

The Rhodanese domain occupies 12-135 (FLNDVPMMDA…MRTFLLDTLH (124 aa)). Residue C95 is the S-selanylcysteine intermediate of the active site.

The protein belongs to the SelU family. As to quaternary structure, monomer.

It carries out the reaction 5-methylaminomethyl-2-thiouridine(34) in tRNA + selenophosphate + (2E)-geranyl diphosphate + H2O + H(+) = 5-methylaminomethyl-2-selenouridine(34) in tRNA + (2E)-thiogeraniol + phosphate + diphosphate. The catalysed reaction is 5-methylaminomethyl-2-thiouridine(34) in tRNA + (2E)-geranyl diphosphate = 5-methylaminomethyl-S-(2E)-geranyl-thiouridine(34) in tRNA + diphosphate. The enzyme catalyses 5-methylaminomethyl-S-(2E)-geranyl-thiouridine(34) in tRNA + selenophosphate + H(+) = 5-methylaminomethyl-2-(Se-phospho)selenouridine(34) in tRNA + (2E)-thiogeraniol. It catalyses the reaction 5-methylaminomethyl-2-(Se-phospho)selenouridine(34) in tRNA + H2O = 5-methylaminomethyl-2-selenouridine(34) in tRNA + phosphate. Its function is as follows. Involved in the post-transcriptional modification of the uridine at the wobble position (U34) of tRNA(Lys), tRNA(Glu) and tRNA(Gln). Catalyzes the conversion of 2-thiouridine (S2U-RNA) to 2-selenouridine (Se2U-RNA). Acts in a two-step process involving geranylation of 2-thiouridine (S2U) to S-geranyl-2-thiouridine (geS2U) and subsequent selenation of the latter derivative to 2-selenouridine (Se2U) in the tRNA chain. The sequence is that of tRNA 2-selenouridine synthase from Pseudomonas syringae pv. syringae (strain B728a).